The sequence spans 325 residues: Olfactory receptor 10AC1 (325 aa).

The Extracellular portion of the chain corresponds to 1–26 (MDSPSNATVPCGFLLQGFSEFPHLRP). Asn-6 carries an N-linked (GlcNAc...) asparagine glycan. The helical transmembrane segment at 27-47 (VLFLLLLGVHLATLGGNLLIL) threads the bilayer. Residues 48-57 (VAVASMPSRQ) are Cytoplasmic-facing. Residues 58–78 (PMLLFLCQLSAIELCYTLVVV) form a helical membrane-spanning segment. Over 79 to 101 (PRSLVDLSTPGHRRGSPISFLSC) the chain is Extracellular. Residues 102 to 122 (AFQMQMFVALGGAECFLLAAM) traverse the membrane as a helical segment. At 123 to 147 (AYDRYVAICHPLRYAAVVTPGLCAR) the chain is on the cytoplasmic side. The helical transmembrane segment at 148–168 (LALACCLRGLAVSVGLTVAIF) threads the bilayer. The Extracellular segment spans residues 169 to 171 (HLP). A helical transmembrane segment spans residues 172–192 (FCGSRLLLHFFCDITALLHLA). At 193-200 (CTRSYADE) the chain is on the cytoplasmic side. The chain crosses the membrane as a helical span at residues 201–221 (LPLLGACLVLLLLPSVLILAS). The Extracellular segment spans residues 222–243 (YGAIAAALRRLRCPKGRGKAAS). Residues 244–264 (TCALHLAVTFLHYGCATFMYV) form a helical membrane-spanning segment. At 265-325 (RPRASYSPRL…QAPGGDLREL (61 aa)) the chain is on the cytoplasmic side.

It belongs to the G-protein coupled receptor 1 family.

The protein localises to the cell membrane. Its function is as follows. Odorant receptor. In Homo sapiens (Human), this protein is Olfactory receptor 10AC1 (OR10AC1).